A 358-amino-acid chain; its full sequence is Trans-enoyl reductase milB (358 aa).

Residues Val48–Lys51, Ala170–Thr173, Ser193–His196, Tyr211, Leu258–Asp259, and Val349–Arg350 contribute to the NADP(+) site.

It belongs to the zinc-containing alcohol dehydrogenase family. In terms of assembly, monomer.

It carries out the reaction 10 malonyl-CoA + acetyl-CoA + 3 AH2 + 8 NADPH + 18 H(+) = cordypyrone A + 3 A + 10 CO2 + 8 NADP(+) + 11 CoA + 8 H2O. It functions in the pathway secondary metabolite biosynthesis. Functionally, trans-enoyl reductase; part of the gene cluster that mediates the biosynthesis of cordypyrones A and B, 2 pyrones that show modest activities against pathogenic bacteria including methicillin-resistant Staphylococcus aureus (MRSA), Mycobacterium tuberculosis and Bacillus cereus. The HR-PKS milA catalyzes the formation of cordypyrones A via condensation of one acetate with 10 malonate units. Since milA lacks an enoyl reductase domain, the 2 beta-keto processing domains DH and KR of milA collaborate with the trans-enoyl reductase milB to catalyze the different levels of reduction. The cytochrome P450 monooxygenase milC then hydroxylates the C-22 of cordypyrones A to yield cordypyrones B. The protein is Trans-enoyl reductase milB of Cordyceps militaris (strain CM01) (Caterpillar fungus).